The following is a 243-amino-acid chain: HTH-type transcriptional regulator MlrA (243 aa).

In terms of domain architecture, HTH merR-type spans 3-72; the sequence is LYTIGEVALL…VSKVKMLLSN (70 aa). Positions 6–25 form a DNA-binding region, H-T-H motif; it reads IGEVALLCDINPVTLRAWQR.

As to quaternary structure, interacts with DgcM and PdeR.

With respect to regulation, activity is regulated by DgcM and PdeR. In terms of biological role, activates transcription of csgD, the master regulator of biofilm formation, by binding to its promoter region. Also controls the transcription of cadC and ibaG. Part of a signaling cascade that regulates curli biosynthesis. The cascade is composed of two c-di-GMP control modules, in which c-di-GMP controlled by the DgcE/PdeH pair (module I) regulates the activity of the DgcM/PdeR pair (module II), which in turn regulates activity of the transcription factor MlrA. The chain is HTH-type transcriptional regulator MlrA from Escherichia coli (strain K12).